Consider the following 494-residue polypeptide: Probable cytosol aminopeptidase (494 aa).

Mn(2+) is bound by residues lysine 260 and aspartate 265. Residue lysine 272 is part of the active site. Mn(2+) contacts are provided by aspartate 283, aspartate 342, and glutamate 344. Arginine 346 is an active-site residue.

This sequence belongs to the peptidase M17 family. Mn(2+) serves as cofactor.

The protein localises to the cytoplasm. It carries out the reaction Release of an N-terminal amino acid, Xaa-|-Yaa-, in which Xaa is preferably Leu, but may be other amino acids including Pro although not Arg or Lys, and Yaa may be Pro. Amino acid amides and methyl esters are also readily hydrolyzed, but rates on arylamides are exceedingly low.. It catalyses the reaction Release of an N-terminal amino acid, preferentially leucine, but not glutamic or aspartic acids.. Presumably involved in the processing and regular turnover of intracellular proteins. Catalyzes the removal of unsubstituted N-terminal amino acids from various peptides. The chain is Probable cytosol aminopeptidase from Bacillus anthracis (strain CDC 684 / NRRL 3495).